The sequence spans 1409 residues: Adhesion and penetration protein autotransporter (1409 aa).

The signal sequence occupies residues 1–25 (MKKTVFRLNFLTACVSLGIASQAWA). A Peptidase S6 domain is found at 26–294 (GHTYFGIDYQ…LIREEWFYNE (269 aa)). Ser250 is a catalytic residue. 2 disordered regions span residues 866–888 (YSAS…TPTS) and 1016–1078 (AKQV…SKRA). Polar residues predominate over residues 1057–1067 (VEQTTETQTSK). Over residues 1068 to 1077 (PKTKKGRSKR) the composition is skewed to basic residues. Residues 1156–1409 (VDQAQSALWT…NVGVKLGYRW (254 aa)) enclose the Autotransporter domain.

The protein localises to the periplasm. Its subcellular location is the secreted. It localises to the cell surface. It is found in the cell outer membrane. Functionally, probable protease; promotes adherence and invasion by directly binding to a host cell structure. The protein is Adhesion and penetration protein autotransporter (hap) of Haemophilus influenzae (strain ATCC 51907 / DSM 11121 / KW20 / Rd).